The chain runs to 607 residues: MTRVTVQTAGVHYKWQMPDQLTQQLRLAHDLREDLVTLEYEYEDAVKAVWSSYPAVAALEAQVAELDERASELASTVKEEKSRQRTKRPSHPAVAQLAETRAQLKAAKASRREAIASVRDEATERLRTISDERYAAQKQLYRDYCTDGLLYWATFNAVLDHHKTAVKRIAAHRKQGRAAQLRHHRWDGTGTISVQLQRQATDPARTPAIIADADTGKWRSSLIVPWVNPDVWDTMDRASRRKAGRVVIRMRCGSSRNPDGTKTSEWIDVPVQQHRMLPADADITAAQLTVRREGADLRATIGITAKIPDQGEVDEGPTIAVHLGWRSSDHGTVVATWRSTEPLDIPETLRGVITTQSAERTVGSIVVPHRIEQRVHHHATVASHRDLAVDSIRDTLVAWLTEHGPQPHPYDGDPITAASVQRWKAPRRFAWLALQWRDTPPPEGADIAETLEAWRRADKKLWLESEHGRGRALRHRTDLHRQVAAYFAGVAGRIVVDDSDIAQIAGTAKHSELLTDVDRQIARRRAIAAPGMLRAAIVAAATRDEVPTTTVSHTGLSRVHAACGHENPADDRYLMQPVLCDGCGRTYDTDLSATILMLQRASAATSN.

The wedge domain (WED-N) stretch occupies residues 1-16; the sequence is MTRVTVQTAGVHYKWQ. Residues 17–189 are recognition domain (REC); sequence MPDQLTQQLR…QLRHHRWDGT (173 aa). The interval 50 to 124 is roof in REC; sequence WSSYPAVAAL…IASVRDEATE (75 aa). Residues 74–83 are compositionally biased toward basic and acidic residues; it reads ASTVKEEKSR. Positions 74–94 are disordered; sequence ASTVKEEKSRQRTKRPSHPAV. Residues 190–315 form a wedge domain (WED-C) region; sequence GTISVQLQRQ…KIPDQGEVDE (126 aa). Positions 316 to 559 are ruvC-I; the sequence is GPTIAVHLGW…TVSHTGLSRV (244 aa). Residues 391-452 form a ruvC insertion region; it reads SIRDTLVAWL…EGADIAETLE (62 aa). Positions 552–588 are target nucleic-acid binding (TNB); the sequence is SHTGLSRVHAACGHENPADDRYLMQPVLCDGCGRTYD. Positions 560, 563, 580, and 583 each coordinate Zn(2+). Residues 589–607 are ruvC-II; the sequence is TDLSATILMLQRASAATSN. A Mg(2+)-binding site is contributed by Asp590.

Belongs to the CRISPR-associated DNA-binding protein Cas12m family. Binds crRNA and target dsDNA as a monomer. Mg(2+) serves as cofactor. Zn(2+) is required as a cofactor.

Its function is as follows. CRISPR (clustered regularly interspaced short palindromic repeat), is an adaptive immune system that provides protection against mobile genetic elements (viruses, transposable elements and conjugative plasmids). CRISPR clusters contain sequences complementary to antecedent mobile elements and target invading nucleic acids. CRISPR clusters are transcribed and processed into CRISPR RNA (crRNA). Recognizes a short motif in the CRISPR repeat sequences (the 5' PAM or protospacer adjacent motif, 5'-TTN-3' in this organism) to help distinguish self versus nonself, as targets within the bacterial CRISPR locus do not have PAMs. Upon expression in E.coli as a CRISPR locus inhibits plasmid propagation when targeted to regions essential for plasmid propagation (replication origin and a selectable marker); inhibits expression of a non-selectable marker, probably at the transcriptional level. Protects E.coli against bacteriophage M13mp18, to a lesser extent against lambda and VpaE1 as well as phage T4 with hydroxymethyl or unmodified (but not glycosylated) cytosines. Preferentially binds to its associated crRNA. Cas12m-crRNA binds DNA in a PAM-dependent, crRNA-guided fashion. Binds a 20-bp crRNA-ss-target DNA heteroduplex, in a 52 nucleotide crRNA. No dsDNA, ssDNA or RNA nuclease activity is seen for the crRNA-Cas12m complex. Probably required for pre-crRNA processing to mature crRNA. In Gordonia otitidis (strain DSM 44809 / CCUG 52243 / JCM 12355 / NBRC 100426 / IFM 10032), this protein is CRISPR-associated DNA-binding protein Cas12m.